The following is a 921-amino-acid chain: MATPSAAFEALMNGVTSWDVPEDAVPCELLLIGEASFPVMVNDMGQVLIAASSYGRGRLVVVSHEDYLVEAQLTPFLLNAVGWLCSSPGAPIGVHPSLAPLAKILEGSGVDAKVEPEVKDSLGVYCIDAYNETMTEKLVKFMKCGGGLLIGGQAWDWANQGEDERVLFTFPGNLVTSVAGIYFTDNKGDTSFFKVSKKMPKIPVLVSCEDDLSDDREELLHGISELDISNSDCFPSQLLVHGALAFPLGLDSYHGCVIAAARYGRGRVVVTGHKVLFTVGKLGPFLLNAVRWLDGGRRGKVVVQTELRTLSGLLAVGGIDTSIEPNLTSDASVYCFEPVSEVGVKELQEFVAEGGGLFVGAQAWWWAFKNPGVSPLARFPGNLLLNPFGISITSQSLNPGPFRTPKAGIRTYHFRSTLAEFQVIMGRKRGNVEKGWLAKLGPDGAAFLQIPAEEIPAYMSVHRLLRKLLSRYRLPVATRENPVINDCCRGAMLSLATGLAHSGSDLSLLVPEIEDMYSSPYLRPSESPITVEVNCTNPGTRYCWMSTGLYIPGRQIIEVSLPEAAASADLKIQIGCHTDDLTRASKLFRGPLVINRCCLDKPTKSITCLWGGLLYIIVPQNSKLGSVPVTVKGAVHAPYYKLGETTLEEWKRRIQENPGPWGELATDNIILTVPTANLRTLENPEPLLRLWDEVMQAVARLGAEPFPLRLPQRIVADVQISVGWMHAGYPIMCHLESVQELINEKLIRTKGLWGPVHELGRNQQRQEWEFPPHTTEATCNLWCVYVHETVLGIPRSRANIALWPPVREKRVRIYLSKGPNVKNWNAWTALETYLQLQEAFGWEPFIRLFTEYRNQTNLPTENVDKMNLWVKMFSHQVQKNLAPFFEAWAWPIQKEVATSLAYLPEWKENIMKLYLLTQMPH.

Positions 542 to 841 constitute a Peptidase M60 domain; the sequence is YCWMSTGLYI…TYLQLQEAFG (300 aa).

Belongs to the TCAF family. In terms of assembly, interacts with TRPM8 (via N-terminus and C-terminus domains); the interaction inhibits TRPM8 channel activity. Interacts with TRPV6. Isoform 2 is expressed in the prostate and strongly expressed in cancerous prostate samples.

The protein resides in the cell membrane. Positively regulates the plasma membrane cation channel TRPM8 activity. Involved in the recruitment of TRPM8 to the cell surface. Promotes prostate cancer cell migration inhibition in a TRPM8-dependent manner. This Homo sapiens (Human) protein is TRPM8 channel-associated factor 1.